Consider the following 925-residue polypeptide: Collagen alpha-2(I) chain (925 aa).

Positions 1–925 are disordered; the sequence is SGGFDFSFLP…FGYEGDFYRA (925 aa). A 4-hydroxyproline mark is found at P10 and P13. Over residues 22 to 34 the composition is skewed to gly residues; it reads RYYGVGLGPGPMG. Positions 35–74 are enriched in low complexity; it reads LMGPRGPPGASGAPGPQGFQGPAGEPGEPGQTGPAGARGP. A 4-hydroxyproline mark is found at P42 and P48. Position 103 is a 5-hydroxylysine; alternate (K103). The O-linked (Gal...) hydroxylysine; alternate glycan is linked to K103. The segment covering 154–171 has biased composition (low complexity); the sequence is DGSVGPVGPAGPIGSAGP. The span at 271-280 shows a compositional bias: gly residues; sequence GESGGKGEPG. Over residues 281-291 the composition is skewed to low complexity; the sequence is SAGPQGPPGSS. Residues 306–315 are compositionally biased toward gly residues; sequence GLRGGPGSRG. 4-hydroxyproline is present on residues P317, P332, and P335. Positions 363-379 are enriched in low complexity; that stretch reads IDGRPGPIGPAGARGEA. Over residues 423–432 the composition is skewed to gly residues; the sequence is GVQGGKGEQG. Low complexity-rich tracts occupy residues 479 to 496 and 508 to 518; these read PGESGAVGPSGAIGSRGP and EPGVVGAPGTA. Positions 519–528 are enriched in gly residues; the sequence is GPAGSGGLPG. Low complexity-rich tracts occupy residues 551-595 and 602-622; these read VGTT…PRGS and VGPAGPNGFAGPAGAAGQPGA. The segment covering 623-632 has biased composition (basic and acidic residues); the sequence is KGERGTKGPK. A compositionally biased stretch (low complexity) spans 640 to 650; sequence PTGPVGSAGPA. The span at 660-669 shows a compositional bias: gly residues; the sequence is GSRGDGGPPG. Residues 671–680 are compositionally biased toward low complexity; it reads TGFPGAAGRT. A compositionally biased stretch (gly residues) spans 696 to 718; sequence GAAGKGDQGPVGRGETGAGGPPG. 2 stretches are compositionally biased toward low complexity: residues 719-753 and 761-771; these read FTGEKGPSGEPGTAGPPGTAGPQGLLGAPGILGLP and LPGVAGAVGEP. Residues 772–782 show a composition bias toward gly residues; that stretch reads GPLGIGPPGAR. A compositionally biased stretch (low complexity) spans 791–806; it reads EPGPVGSVGPVGALGP. Positions 816–827 are enriched in basic and acidic residues; that stretch reads RGDKGEPGEKGP. The segment covering 897–907 has biased composition (pro residues); that stretch reads PAGPPGPPGPP.

The protein belongs to the fibrillar collagen family. As to quaternary structure, trimers of one alpha 2(I) and two alpha 1(I) chains. Interacts (via C-terminus) with TMEM131 (via PapD-L domain); the interaction is direct and is involved in assembly and TRAPPIII ER-to-Golgi transport complex-dependent secretion of collagen. Post-translationally, prolines at the third position of the tripeptide repeating unit (G-X-Y) are hydroxylated in some or all of the chains. Expressed in bones.

The protein localises to the secreted. Its subcellular location is the extracellular space. The protein resides in the extracellular matrix. In terms of biological role, type I collagen is a member of group I collagen (fibrillar forming collagen). The polypeptide is Collagen alpha-2(I) chain (Acratocnus sp. (strain SLP-2019) (Ground sloth)).